A 338-amino-acid chain; its full sequence is tRNA N6-adenosine threonylcarbamoyltransferase (338 aa).

Positions 111 and 115 each coordinate Fe cation. Residues 133 to 137 (LVSGG), D166, G179, D183, and N275 each bind substrate. D300 is a binding site for Fe cation.

It belongs to the KAE1 / TsaD family. Fe(2+) serves as cofactor.

Its subcellular location is the cytoplasm. It catalyses the reaction L-threonylcarbamoyladenylate + adenosine(37) in tRNA = N(6)-L-threonylcarbamoyladenosine(37) in tRNA + AMP + H(+). In terms of biological role, required for the formation of a threonylcarbamoyl group on adenosine at position 37 (t(6)A37) in tRNAs that read codons beginning with adenine. Is involved in the transfer of the threonylcarbamoyl moiety of threonylcarbamoyl-AMP (TC-AMP) to the N6 group of A37, together with TsaE and TsaB. TsaD likely plays a direct catalytic role in this reaction. The chain is tRNA N6-adenosine threonylcarbamoyltransferase from Treponema denticola (strain ATCC 35405 / DSM 14222 / CIP 103919 / JCM 8153 / KCTC 15104).